Here is a 515-residue protein sequence, read N- to C-terminus: Maturase K (515 aa).

Belongs to the intron maturase 2 family. MatK subfamily.

It localises to the plastid. Its subcellular location is the chloroplast. In terms of biological role, usually encoded in the trnK tRNA gene intron. Probably assists in splicing its own and other chloroplast group II introns. The chain is Maturase K from Picea abies (Norway spruce).